The sequence spans 279 residues: Prepilin leader peptidase/N-methyltransferase (279 aa).

Residues 1-16 (MDDLREFAQLFPAWWF) lie on the Periplasmic side of the membrane. The chain crosses the membrane as a helical span at residues 17–35 (GALGVLGLIVGSFLNVVIY). Over 36-104 (RLPIMLERRW…RSRCCHQSVS (69 aa)) the chain is Cytoplasmic. The helical transmembrane segment at 105-123 (VQYPLVEVITMLAFLAAGL) threads the bilayer. Residues 124–130 (LWLPGMA) are Periplasmic-facing. A helical membrane pass occupies residues 131-149 (LWGALILLSFLLVLTVIDI). Residues 150–163 (KTLLLPDELTLSLL) lie on the Cytoplasmic side of the membrane. The helical transmembrane segment at 164 to 182 (WMGLLFNLSGTFVSLNDAV) threads the bilayer. Over 183-185 (VGA) the chain is Periplasmic. A helical membrane pass occupies residues 186–204 (MAGYLSLWLLYWAFKYATG). The Cytoplasmic portion of the chain corresponds to 205–214 (KEALGYGDFK). A helical transmembrane segment spans residues 215-233 (LLAALGAWLGWQALPNLVL). The Periplasmic portion of the chain corresponds to 234-236 (VAA). A helical transmembrane segment spans residues 237–254 (LSGLVVTLIWRGLRKEDT). The Cytoplasmic segment spans residues 255–257 (AKP). Residues 258–276 (LAFGPWLAIGGVFGMIMNG) traverse the membrane as a helical segment. Over 277-279 (FNL) the chain is Periplasmic.

The protein belongs to the peptidase A24 family.

The protein localises to the cell inner membrane. It carries out the reaction Typically cleaves a -Gly-|-Phe- bond to release an N-terminal, basic peptide of 5-8 residues from type IV prepilin, and then N-methylates the new N-terminal amino group, the methyl donor being S-adenosyl-L-methionine.. In terms of biological role, plays a role in type II pseudopili formation by proteolytically removing the leader sequence from substrate proteins and subsequently monomethylating the alpha-amino group of the newly exposed N-terminal phenylalanine. Substrates include proteins required for biogenesis of the type II general secretory apparatus. The protein is Prepilin leader peptidase/N-methyltransferase (outO) of Pectobacterium carotovorum subsp. carotovorum (Erwinia carotovora subsp. carotovora).